Here is a 400-residue protein sequence, read N- to C-terminus: Argininosuccinate synthase (400 aa).

ATP contacts are provided by residues 10-18 (AYSGGVDTS) and A38. Y89 contributes to the L-citrulline binding site. G119 is a binding site for ATP. Residues T121, N125, and D126 each coordinate L-aspartate. N125 is an L-citrulline binding site. Residues R129, S177, S186, E262, and Y274 each coordinate L-citrulline.

The protein belongs to the argininosuccinate synthase family. Type 1 subfamily. As to quaternary structure, homotetramer.

The protein localises to the cytoplasm. The catalysed reaction is L-citrulline + L-aspartate + ATP = 2-(N(omega)-L-arginino)succinate + AMP + diphosphate + H(+). Its pathway is amino-acid biosynthesis; L-arginine biosynthesis; L-arginine from L-ornithine and carbamoyl phosphate: step 2/3. This is Argininosuccinate synthase from Nostoc sp. (strain PCC 7120 / SAG 25.82 / UTEX 2576).